Here is a 396-residue protein sequence, read N- to C-terminus: Tryptophan synthase beta chain (396 aa).

Position 88 is an N6-(pyridoxal phosphate)lysine (lysine 88).

This sequence belongs to the TrpB family. In terms of assembly, tetramer of two alpha and two beta chains. Pyridoxal 5'-phosphate is required as a cofactor.

The enzyme catalyses (1S,2R)-1-C-(indol-3-yl)glycerol 3-phosphate + L-serine = D-glyceraldehyde 3-phosphate + L-tryptophan + H2O. It participates in amino-acid biosynthesis; L-tryptophan biosynthesis; L-tryptophan from chorismate: step 5/5. Its function is as follows. The beta subunit is responsible for the synthesis of L-tryptophan from indole and L-serine. This is Tryptophan synthase beta chain from Shewanella baltica (strain OS155 / ATCC BAA-1091).